Consider the following 652-residue polypeptide: Acetyl-coenzyme A synthetase (652 aa).

CoA is bound by residues 191–194 (RAGN) and T311. Residues 387–389 (GEP), 411–416 (DTWWQT), D503, and R518 each bind ATP. Residue S526 participates in CoA binding. R529 contributes to the ATP binding site. Mg(2+)-binding residues include V540, H542, and V545. Residue R587 coordinates CoA. Position 613 is an N6-acetyllysine (K613).

This sequence belongs to the ATP-dependent AMP-binding enzyme family. Mg(2+) serves as cofactor. Acetylated. Deacetylation by the SIR2-homolog deacetylase activates the enzyme.

It carries out the reaction acetate + ATP + CoA = acetyl-CoA + AMP + diphosphate. In terms of biological role, catalyzes the conversion of acetate into acetyl-CoA (AcCoA), an essential intermediate at the junction of anabolic and catabolic pathways. AcsA undergoes a two-step reaction. In the first half reaction, AcsA combines acetate with ATP to form acetyl-adenylate (AcAMP) intermediate. In the second half reaction, it can then transfer the acetyl group from AcAMP to the sulfhydryl group of CoA, forming the product AcCoA. This is Acetyl-coenzyme A synthetase from Marinomonas sp. (strain MWYL1).